The sequence spans 520 residues: Hydroxymethylglutaryl-CoA synthase, cytoplasmic (520 aa).

At Ser4 the chain carries Phosphoserine. Asp43 and Ala44 together coordinate (3S)-3-hydroxy-3-methylglutaryl-CoA. 44–46 (AGK) contacts CoA. Lys46 is modified (N6-acetyllysine). The active-site Proton donor/acceptor is Glu95. Positions 129, 167, 171, 221, and 264 each coordinate (3S)-3-hydroxy-3-methylglutaryl-CoA. Cys129 acts as the Acyl-thioester intermediate in catalysis. Residue Asn167 participates in CoA binding. Ser221 is a CoA binding site. Residue His264 is the Proton donor/acceptor of the active site. Residues Lys269 and Lys273 each coordinate CoA. Positions 273, 343, and 377 each coordinate (3S)-3-hydroxy-3-methylglutaryl-CoA. Position 273 is an N6-acetyllysine (Lys273). Thr476 is subject to Phosphothreonine. The tract at residues 492-520 (HIPSPAKKVPRLPATAAEPEAAVISNGEH) is disordered. Phosphoserine occurs at positions 495 and 516.

The protein belongs to the thiolase-like superfamily. HMG-CoA synthase family. In terms of assembly, homodimer.

Its subcellular location is the cytoplasm. The catalysed reaction is acetoacetyl-CoA + acetyl-CoA + H2O = (3S)-3-hydroxy-3-methylglutaryl-CoA + CoA + H(+). It participates in metabolic intermediate biosynthesis; (R)-mevalonate biosynthesis; (R)-mevalonate from acetyl-CoA: step 2/3. Functionally, catalyzes the condensation of acetyl-CoA with acetoacetyl-CoA to form HMG-CoA, which is converted by HMG-CoA reductase (HMGCR) into mevalonate, a precursor for cholesterol synthesis. This Homo sapiens (Human) protein is Hydroxymethylglutaryl-CoA synthase, cytoplasmic.